The primary structure comprises 281 residues: Undecaprenyl-diphosphatase (281 aa).

7 helical membrane-spanning segments follow: residues 4 to 24 (ILLL…FLPI), 46 to 63 (AFEV…CWEF), 83 to 103 (FVLN…LFGK), 108 to 128 (VLFS…IIFW), 187 to 207 (AVAT…ATAY), 222 to 242 (EFTL…FVCV), and 257 to 277 (FAWY…TGLI).

This sequence belongs to the UppP family.

The protein resides in the cell inner membrane. It carries out the reaction di-trans,octa-cis-undecaprenyl diphosphate + H2O = di-trans,octa-cis-undecaprenyl phosphate + phosphate + H(+). Catalyzes the dephosphorylation of undecaprenyl diphosphate (UPP). Confers resistance to bacitracin. The chain is Undecaprenyl-diphosphatase from Polynucleobacter necessarius subsp. necessarius (strain STIR1).